We begin with the raw amino-acid sequence, 93 residues long: NAD(P)H-quinone oxidoreductase subunit 4L, chloroplastic (93 aa).

The next 2 helical transmembrane spans lie at 1 to 21 and 60 to 80; these read MLEH…SGLI and IFAI…LSIA.

It belongs to the complex I subunit 4L family. In terms of assembly, NDH is composed of at least 16 different subunits, 5 of which are encoded in the nucleus.

The protein resides in the plastid. The protein localises to the chloroplast thylakoid membrane. The catalysed reaction is a plastoquinone + NADH + (n+1) H(+)(in) = a plastoquinol + NAD(+) + n H(+)(out). The enzyme catalyses a plastoquinone + NADPH + (n+1) H(+)(in) = a plastoquinol + NADP(+) + n H(+)(out). Its function is as follows. NDH shuttles electrons from NAD(P)H:plastoquinone, via FMN and iron-sulfur (Fe-S) centers, to quinones in the photosynthetic chain and possibly in a chloroplast respiratory chain. The immediate electron acceptor for the enzyme in this species is believed to be plastoquinone. Couples the redox reaction to proton translocation, and thus conserves the redox energy in a proton gradient. The polypeptide is NAD(P)H-quinone oxidoreductase subunit 4L, chloroplastic (Anthoceros angustus (Hornwort)).